A 326-amino-acid chain; its full sequence is Guanine nucleotide-binding protein subunit beta-like protein 1 (326 aa).

6 WD repeats span residues 17–61, 64–104, 159–202, 205–244, 250–291, and 292–325; these read GTQS…IVTT, GHGG…NTIM, ARPG…VCSQ, CHEEPVMGLDFDSQKAKGISGSAGKVLAVWSLDDQQSLQV, LTNP…AVLA, and FHSAPVYCVAFAADGLLAAGSKDQRISIWSLYPC.

In terms of tissue distribution, expressed at low levels in most tissues and highly expressed in adult testis. Widely expressed in adult brain with striking regional distribution in forebrain, midbrain, and hindbrain structures, including the thalamus, hypothalamus, amygdala, hippocampus, pons.

It localises to the cytoplasm. Its subcellular location is the nucleus. Functionally, acts as a critical regulator of DNA damage response (DDR) signaling via specifically regulating phosphatidylinositol 3-kinase-related protein kinase (PIKK) family proteins. This chain is Guanine nucleotide-binding protein subunit beta-like protein 1 (Gnb1l), found in Mus musculus (Mouse).